Consider the following 255-residue polypeptide: 4-hydroxy-tetrahydrodipicolinate reductase (255 aa).

Residues 9–14, 89–91, and 115–118 each bind NAD(+); these read GFKGRM, GTT, and APNF. His-145 serves as the catalytic Proton donor/acceptor. His-146 is a binding site for (S)-2,3,4,5-tetrahydrodipicolinate. The active-site Proton donor is Lys-149. 155–156 serves as a coordination point for (S)-2,3,4,5-tetrahydrodipicolinate; it reads GT.

This sequence belongs to the DapB family.

It is found in the cytoplasm. It carries out the reaction (S)-2,3,4,5-tetrahydrodipicolinate + NAD(+) + H2O = (2S,4S)-4-hydroxy-2,3,4,5-tetrahydrodipicolinate + NADH + H(+). It catalyses the reaction (S)-2,3,4,5-tetrahydrodipicolinate + NADP(+) + H2O = (2S,4S)-4-hydroxy-2,3,4,5-tetrahydrodipicolinate + NADPH + H(+). The protein operates within amino-acid biosynthesis; L-lysine biosynthesis via DAP pathway; (S)-tetrahydrodipicolinate from L-aspartate: step 4/4. Functionally, catalyzes the conversion of 4-hydroxy-tetrahydrodipicolinate (HTPA) to tetrahydrodipicolinate. This is 4-hydroxy-tetrahydrodipicolinate reductase from Streptococcus thermophilus (strain CNRZ 1066).